The sequence spans 145 residues: Large ribosomal subunit protein uL14m (145 aa).

The N-terminal 30 residues, 1–30, are a transit peptide targeting the mitochondrion; sequence MAVLTGLFGFFAYVRGAVSQRCFSTSGSLS.

The protein belongs to the universal ribosomal protein uL14 family. In terms of assembly, component of the mitochondrial ribosome large subunit (39S) which comprises a 16S rRNA and about 50 distinct proteins. Interacts with MALSU1.

Its subcellular location is the mitochondrion. May form part of 2 intersubunit bridges in the assembled ribosome. Upon binding to MALSU1, intersubunit bridge formation is blocked, preventing ribosome formation and repressing translation. The protein is Large ribosomal subunit protein uL14m (Mrpl14) of Rattus norvegicus (Rat).